The following is a 91-amino-acid chain: MARSLKKAPFVYDHLMKKVVAILENKSPKRPIKTWSRRSTIYPDFIGLTFQVHNGKAFIDVFVTNDMVGHKLGEFAPTRTFSGHGADKGKK.

Belongs to the universal ribosomal protein uS19 family.

Functionally, protein S19 forms a complex with S13 that binds strongly to the 16S ribosomal RNA. This Metamycoplasma arthritidis (strain 158L3-1) (Mycoplasma arthritidis) protein is Small ribosomal subunit protein uS19.